We begin with the raw amino-acid sequence, 181 residues long: Adenylate kinase (181 aa).

10–15 (GAGKGT) provides a ligand contact to ATP. The NMP stretch occupies residues 30 to 59 (STGDLFRANISQGTELGKQAQEYMDAGKLV). AMP-binding positions include T31, R36, 57-59 (KLV), 85-88 (GFPR), and Q92. The LID stretch occupies residues 126–132 (SRGRNDD). R127 is an ATP binding site. Positions 129 and 140 each coordinate AMP. Residue G166 coordinates ATP.

It belongs to the adenylate kinase family. In terms of assembly, monomer.

The protein resides in the cytoplasm. It catalyses the reaction AMP + ATP = 2 ADP. It participates in purine metabolism; AMP biosynthesis via salvage pathway; AMP from ADP: step 1/1. In terms of biological role, catalyzes the reversible transfer of the terminal phosphate group between ATP and AMP. Plays an important role in cellular energy homeostasis and in adenine nucleotide metabolism. In Corynebacterium urealyticum (strain ATCC 43042 / DSM 7109), this protein is Adenylate kinase.